The chain runs to 218 residues: Putative glutamine transport system permease protein GlnP (218 aa).

An ABC transmembrane type-1 domain is found at 19 to 208; the sequence is TLVTLKYSVI…ILVMLISFIA (190 aa). The next 4 helical transmembrane spans lie at 25–45, 57–79, 86–108, and 187–207; these read YSVI…ICKV, FYTS…FASP, FSVF…SEVI, and FFPM…ISFI.

It belongs to the binding-protein-dependent transport system permease family. HisMQ subfamily.

It localises to the cell inner membrane. Its function is as follows. Part of the binding-protein-dependent transport system for glutamine; probably responsible for the translocation of the substrate across the membrane. The polypeptide is Putative glutamine transport system permease protein GlnP (glnP) (Rickettsia conorii (strain ATCC VR-613 / Malish 7)).